A 771-amino-acid polypeptide reads, in one-letter code: MAQWNQLQQLDTRYLEQLHQLYSDSFPMELRQFLAPWIESQDWAYAANKESHATLVFHNLLGEIDQQYSRFLQESNVLYQHNLRRIKQFLQSRYLEKPMEIARIVARCLWEESRLLQTAATAAQQGGQATHPTAAVVTEKQQMLEQHLQDVRKRVQDLEQKMKVVENLQDDFDFNYKTLKSQGDMQDLNGNNQSVTRQKMQQLEQMLTALDQMRRGIVSELAGLLSAMEYVQKMLADEELADWKRRQQIACIGGPPNICLDRLENWITSLAESQLQTRQQIKKLEELQQKVSYKGDPIVQHRPMLEERIVELFRNLMKSAFVVERQPCMPMHPDRPLVIKTGVQFTTKVRLLVKFPELNYQLKIKVCIDKDSGDVAALRGSRKFNILGTNTKVMNMEESNNGSLSAEFKHLTLREQRCGNGGRANCDASLIVTEELHLITFETEVYHQGLKIDLETHSLPVVVISNICQMPNAWASILWYNMLTNNPKNVNFFTKPPIGTWDQVAEVLSWQFSSTTKRGLSIEQLTTLAEKLLGPGVNYSGCQITWAKFCKENMAGKGFSFWVWLDNIIDLVKKYILALWNEGYIMGFISKERERAILSTKPPGTFLLRFSESSKEGGITFTWVEKDISGKTQIQSVEPYTKQQLNSMSFAEIIMGYKIMDATNILVSPLVYLYPDIPKEEAFGKYCRSESQEHSEATDSGSAAPYLKTKFICVTPTSFSNTIDLPMSPRTLDSLMQFGNSSEGAEANAGGQFESLTFDMELTQECASSPM.

The short motif at 150 to 162 (DVRKRVQDLEQKM) is the Essential for nuclear import element. Residues 580–670 (WNEGYIMGFI…DATNILVSPL (91 aa)) enclose the SH2 domain. A Phosphotyrosine modification is found at Tyr706.

It belongs to the transcription factor STAT family. Forms a homodimer or a heterodimer with a related family member, such as STAT1. Interacts with OCAD1.

Its subcellular location is the cytoplasm. It localises to the nucleus. Its function is as follows. Transcription factor that binds to the interleukin-6 (IL-6)-responsive elements identified in the promoters of various acute-phase protein genes. This chain is Signal transducer and activator of transcription 3 (STAT3), found in Gallus gallus (Chicken).